Here is a 640-residue protein sequence, read N- to C-terminus: Rab proteins geranylgeranyltransferase component A (640 aa).

2 disordered regions span residues 414–439 and 594–640; these read DILG…NNNN and HNEN…EMEL. The segment covering 419 to 439 has biased composition (low complexity); that stretch reads NNNNNNNNNNNNNNNNNNNNN. The span at 604-624 shows a compositional bias: acidic residues; the sequence is IDSDEDEDEDINDMNDNEEED.

This sequence belongs to the Rab GDI family.

Substrate-binding subunit (component A) of the Rab geranylgeranyltransferase (GGTase) complex. Binds unprenylated Rab proteins and presents the substrate peptide to the catalytic component B. The component A is thought to be regenerated by transferring its prenylated Rab back to the donor membrane. The sequence is that of Rab proteins geranylgeranyltransferase component A (MRS6) from Candida albicans (Yeast).